Consider the following 394-residue polypeptide: Elongation factor Tu 2 (394 aa).

In terms of domain architecture, tr-type G spans lysine 10–alanine 204. The segment at glycine 19–threonine 26 is G1. Residue glycine 19–threonine 26 coordinates GTP. Threonine 26 provides a ligand contact to Mg(2+). A G2 region spans residues glycine 60–asparagine 64. The interval aspartate 81 to glycine 84 is G3. GTP-binding positions include aspartate 81 to histidine 85 and asparagine 136 to aspartate 139. The tract at residues asparagine 136 to aspartate 139 is G4. A G5 region spans residues serine 174–leucine 176.

The protein belongs to the TRAFAC class translation factor GTPase superfamily. Classic translation factor GTPase family. EF-Tu/EF-1A subfamily. In terms of assembly, monomer.

It is found in the cytoplasm. The enzyme catalyses GTP + H2O = GDP + phosphate + H(+). GTP hydrolase that promotes the GTP-dependent binding of aminoacyl-tRNA to the A-site of ribosomes during protein biosynthesis. The chain is Elongation factor Tu 2 from Shewanella frigidimarina (strain NCIMB 400).